The sequence spans 269 residues: Phosphate import ATP-binding protein PstB (269 aa).

The ABC transporter domain maps to 21-264; it reads IEIKDFNFFY…PKDRRTENYI (244 aa). 55 to 62 is a binding site for ATP; it reads GPSGCGKT.

Belongs to the ABC transporter superfamily. Phosphate importer (TC 3.A.1.7) family. The complex is composed of two ATP-binding proteins (PstB), two transmembrane proteins (PstC and PstA) and a solute-binding protein (PstS).

The protein localises to the cell membrane. It catalyses the reaction phosphate(out) + ATP + H2O = ADP + 2 phosphate(in) + H(+). In terms of biological role, part of the ABC transporter complex PstSACB involved in phosphate import. Responsible for energy coupling to the transport system. The polypeptide is Phosphate import ATP-binding protein PstB (Mycoplasma capricolum subsp. capricolum (strain California kid / ATCC 27343 / NCTC 10154)).